A 38-amino-acid polypeptide reads, in one-letter code: MKVQASVKKICGSCKVVRRKGRVHIICTAEPRHKQRQG.

It belongs to the bacterial ribosomal protein bL36 family.

The sequence is that of Large ribosomal subunit protein bL36 from Psychrobacter cryohalolentis (strain ATCC BAA-1226 / DSM 17306 / VKM B-2378 / K5).